We begin with the raw amino-acid sequence, 287 residues long: Probable glucose uptake protein GlcU (287 aa).

9 consecutive transmembrane segments (helical) span residues 7 to 29, 34 to 56, 58 to 75, 114 to 136, 156 to 178, 183 to 202, 209 to 228, 233 to 255, and 267 to 286; these read LIAL…VGGG, IRGT…FAKF, NPTV…WAFG, WSSM…GVAL, MGIL…IFGV, ALFF…SMNH, TALN…FMFY, VGVA…GGIF, and TGIW…LGNL.

It belongs to the GRP transporter (TC 2.A.7.5) family.

It localises to the cell membrane. In terms of biological role, involved in the uptake of glucose. The chain is Probable glucose uptake protein GlcU (glcU) from Staphylococcus aureus (strain MRSA252).